Consider the following 92-residue polypeptide: Small ribosomal subunit protein uS19 (92 aa).

This sequence belongs to the universal ribosomal protein uS19 family.

Protein S19 forms a complex with S13 that binds strongly to the 16S ribosomal RNA. This chain is Small ribosomal subunit protein uS19, found in Prochlorococcus marinus (strain MIT 9215).